Consider the following 245-residue polypeptide: Probable transcriptional regulatory protein BF2589 (245 aa).

Positions 225–245 (EDEDVQNVYTNMKPADNEGEE) are disordered.

This sequence belongs to the TACO1 family.

The protein localises to the cytoplasm. This is Probable transcriptional regulatory protein BF2589 from Bacteroides fragilis (strain ATCC 25285 / DSM 2151 / CCUG 4856 / JCM 11019 / LMG 10263 / NCTC 9343 / Onslow / VPI 2553 / EN-2).